The primary structure comprises 537 residues: Fucosyltransferase 6 (537 aa).

Over 1 to 20 the chain is Cytoplasmic; it reads MYHIFQISSEVFRAFGLKMK. A helical; Signal-anchor for type II membrane protein transmembrane segment spans residues 21–41; it reads ILLTLVFSGLLIWSVVLVSFS. Topologically, residues 42–537 are lumenal; it reads NDFNNQLLVA…NDGLKLFDEL (496 aa). N-linked (GlcNAc...) asparagine glycans are attached at residues Asn-54, Asn-231, and Asn-378.

This sequence belongs to the glycosyltransferase 37 family. Expressed in roots and flowers.

It localises to the golgi apparatus. The protein resides in the golgi stack membrane. The protein operates within protein modification; protein glycosylation. Functionally, may be involved in cell wall biosynthesis. May act as a fucosyltransferase. This is Fucosyltransferase 6 (FUT6) from Arabidopsis thaliana (Mouse-ear cress).